We begin with the raw amino-acid sequence, 270 residues long: Phosphonoacetaldehyde hydrolase (270 aa).

The Nucleophile role is filled by aspartate 11. The Mg(2+) site is built by aspartate 11 and alanine 13. The Schiff-base intermediate with substrate role is filled by lysine 53. Aspartate 187 contacts Mg(2+).

This sequence belongs to the HAD-like hydrolase superfamily. PhnX family. As to quaternary structure, homodimer. Mg(2+) serves as cofactor.

The catalysed reaction is phosphonoacetaldehyde + H2O = acetaldehyde + phosphate + H(+). In terms of biological role, involved in phosphonate degradation. The sequence is that of Phosphonoacetaldehyde hydrolase from Salmonella paratyphi C (strain RKS4594).